The following is a 622-amino-acid chain: Dynein axonemal assembly factor 1 (622 aa).

Residues 1 to 80 (MHPEVSEPQA…ARNDRDDRGP (80 aa)) form a disordered region. The span at 22–42 (AGDHGRAGPGVRKEEINETKE) shows a compositional bias: basic and acidic residues. Residues 48-59 (STTSCQSQKQQS) show a composition bias toward low complexity. The segment covering 62–80 (SRLDCRSGYARNDRDDRGP) has biased composition (basic and acidic residues). LRR repeat units follow at residues 101-123 (ALNDTLYLHFKGFDRIENLEEYT), 124-145 (GLRCLWLECNGIQRIENLQAQS), 146-167 (ELRCLFLQVNLLHKIENLEPLQ), 168-189 (KLDALNLSNNYIKTIENLSCLP), 190-211 (VLNTLQMAHNRLETVADIQHLR), and 215-236 (RLCVLDLSHNMLSDPEILSVLE). One can recognise an LRRCT domain in the interval 249–288 (NPVTKHIPNYRRTVTVRLKQLTYLDDRPVFPKDRACAEAW). Over residues 326 to 336 (EERKKARDKGE) the composition is skewed to basic and acidic residues. The tract at residues 326 to 360 (EERKKARDKGETPLPDSEESSSTSPEAQDKPPLGE) is disordered. Low complexity predominate over residues 337 to 351 (TPLPDSEESSSTSPE). Residues Ser-349, Ser-464, and Ser-487 each carry the phosphoserine modification. 2 disordered regions span residues 481–503 (SSLSDDSDPELNDSPLPMLEHTP) and 540–622 (LETQ…FGLD). Over residues 540 to 550 (LETQGQVFSTT) the composition is skewed to polar residues.

It belongs to the DNAAF1 family.

It localises to the cell projection. The protein localises to the cilium. Functionally, cilium-specific protein required for the stability of the ciliary architecture. Plays a role in cytoplasmic preassembly of dynein arms. Involved in regulation of microtubule-based cilia and actin-based brush border microvilli. The chain is Dynein axonemal assembly factor 1 (Dnaaf1) from Peromyscus leucopus (White-footed mouse).